We begin with the raw amino-acid sequence, 363 residues long: tRNA/tmRNA (uracil-C(5))-methyltransferase (363 aa).

S-adenosyl-L-methionine-binding residues include Q187, Y215, N220, E236, and D296. The active-site Nucleophile is C321. Residue E355 is the Proton acceptor of the active site.

It belongs to the class I-like SAM-binding methyltransferase superfamily. RNA M5U methyltransferase family. TrmA subfamily.

It carries out the reaction uridine(54) in tRNA + S-adenosyl-L-methionine = 5-methyluridine(54) in tRNA + S-adenosyl-L-homocysteine + H(+). The catalysed reaction is uridine(341) in tmRNA + S-adenosyl-L-methionine = 5-methyluridine(341) in tmRNA + S-adenosyl-L-homocysteine + H(+). Dual-specificity methyltransferase that catalyzes the formation of 5-methyluridine at position 54 (m5U54) in all tRNAs, and that of position 341 (m5U341) in tmRNA (transfer-mRNA). This Pseudomonas aeruginosa (strain ATCC 15692 / DSM 22644 / CIP 104116 / JCM 14847 / LMG 12228 / 1C / PRS 101 / PAO1) protein is tRNA/tmRNA (uracil-C(5))-methyltransferase.